Consider the following 180-residue polypeptide: Nucleoside triphosphate/diphosphate phosphatase (180 aa).

Catalysis depends on Arg26, which acts as the Proton donor. Mg(2+) is bound by residues Asn90, Asp106, Asp108, Asp110, Asp123, and Glu126.

It belongs to the Ntdp family. The cofactor is Mg(2+).

It catalyses the reaction a ribonucleoside 5'-triphosphate + H2O = a ribonucleoside 5'-diphosphate + phosphate + H(+). It carries out the reaction a ribonucleoside 5'-diphosphate + H2O = a ribonucleoside 5'-phosphate + phosphate + H(+). Functionally, has nucleoside phosphatase activity towards nucleoside triphosphates and nucleoside diphosphates. In Staphylococcus aureus (strain MSSA476), this protein is Nucleoside triphosphate/diphosphate phosphatase.